The chain runs to 127 residues: Classical arabinogalactan protein 10 (127 aa).

The signal sequence occupies residues 1-21 (MASKSVVVLLFLALIASSAIA). Gln22 is subject to Pyrrolidone carboxylic acid. Positions 22-107 (QAPGPAPTRS…TGSTPVDNNN (86 aa)) are disordered. 4-hydroxyproline is present on residues Pro24, Pro26, Pro28, Pro32, and Pro36. O-linked (Ara...) hydroxyproline glycans are attached at residues Pro24, Pro26, Pro28, Pro32, and Pro36. Composition is skewed to pro residues over residues 25 to 39 (GPAP…PAQP), 48 to 58 (SITPTPTPTPS), and 66 to 86 (VSPP…PPTS). Residues 98–107 (TGSTPVDNNN) are compositionally biased toward polar residues. Asn107 carries GPI-anchor amidated asparagine lipidation. Positions 108–127 (AATLAAGSLAGFVFVASLLL) are cleaved as a propeptide — removed in mature form.

It belongs to the classical AGP family. O-glycosylated on hydroxyprolines; noncontiguous hydroxylproline residues are glycosylated with arabinogalactan. In terms of tissue distribution, predominantly expressed in flowers and at a lower level in roots and siliques.

The protein resides in the cell membrane. Functionally, proteoglycan that seems to be implicated in diverse developmental roles such as differentiation, cell-cell recognition, embryogenesis and programmed cell death. This chain is Classical arabinogalactan protein 10 (AGP10), found in Arabidopsis thaliana (Mouse-ear cress).